The following is a 190-amino-acid chain: ATP synthase subunit delta (190 aa).

This sequence belongs to the ATPase delta chain family. In terms of assembly, F-type ATPases have 2 components, F(1) - the catalytic core - and F(0) - the membrane proton channel. F(1) has five subunits: alpha(3), beta(3), gamma(1), delta(1), epsilon(1). F(0) has three main subunits: a(1), b(2) and c(10-14). The alpha and beta chains form an alternating ring which encloses part of the gamma chain. F(1) is attached to F(0) by a central stalk formed by the gamma and epsilon chains, while a peripheral stalk is formed by the delta and b chains.

Its subcellular location is the cell inner membrane. In terms of biological role, f(1)F(0) ATP synthase produces ATP from ADP in the presence of a proton or sodium gradient. F-type ATPases consist of two structural domains, F(1) containing the extramembraneous catalytic core and F(0) containing the membrane proton channel, linked together by a central stalk and a peripheral stalk. During catalysis, ATP synthesis in the catalytic domain of F(1) is coupled via a rotary mechanism of the central stalk subunits to proton translocation. This protein is part of the stalk that links CF(0) to CF(1). It either transmits conformational changes from CF(0) to CF(1) or is implicated in proton conduction. The chain is ATP synthase subunit delta from Anaplasma marginale (strain Florida).